A 172-amino-acid polypeptide reads, in one-letter code: Neuropeptide-like protein nlp-8 (172 aa).

Residues 1–26 form the signal peptide; it reads MSQKLLPISPLQLLFLQCLLIGFTAA.

Post-translationally, may be processed by convertase egl-3.

It localises to the secreted. Functionally, neuropeptide-like protein. Plays a role in behaviors associated with a sleep-like state induced by stress (SIS), acting in concert with the FARP (FMRFamide related) peptides, flp-13 and flp-24. This is Neuropeptide-like protein nlp-8 from Caenorhabditis elegans.